The sequence spans 510 residues: Light-independent protochlorophyllide reductase subunit B (510 aa).

Asp-36 provides a ligand contact to [4Fe-4S] cluster. Asp-296 functions as the Proton donor in the catalytic mechanism. Residue Gly-431–Met-432 participates in substrate binding.

This sequence belongs to the ChlB/BchB/BchZ family. In terms of assembly, protochlorophyllide reductase is composed of three subunits; ChlL, ChlN and ChlB. Forms a heterotetramer of two ChlB and two ChlN subunits. The cofactor is [4Fe-4S] cluster.

Its subcellular location is the plastid. The protein resides in the chloroplast. It carries out the reaction chlorophyllide a + oxidized 2[4Fe-4S]-[ferredoxin] + 2 ADP + 2 phosphate = protochlorophyllide a + reduced 2[4Fe-4S]-[ferredoxin] + 2 ATP + 2 H2O. It participates in porphyrin-containing compound metabolism; chlorophyll biosynthesis (light-independent). In terms of biological role, component of the dark-operative protochlorophyllide reductase (DPOR) that uses Mg-ATP and reduced ferredoxin to reduce ring D of protochlorophyllide (Pchlide) to form chlorophyllide a (Chlide). This reaction is light-independent. The NB-protein (ChlN-ChlB) is the catalytic component of the complex. This is Light-independent protochlorophyllide reductase subunit B from Auxenochlorella protothecoides (Green microalga).